We begin with the raw amino-acid sequence, 84 residues long: Large ribosomal subunit protein bL27 (84 aa).

Residues 1–22 (MAHKKAGGSTRNGRDSESKRLG) form a disordered region.

Belongs to the bacterial ribosomal protein bL27 family.

The chain is Large ribosomal subunit protein bL27 from Shewanella oneidensis (strain ATCC 700550 / JCM 31522 / CIP 106686 / LMG 19005 / NCIMB 14063 / MR-1).